Reading from the N-terminus, the 88-residue chain is MANIKSSEKDIRRTKRRNAANSQNRSRLRTQAKKVLKAIKEKDQKAAMTLFIEYTSLLDKAAKTNLIHSKNADRKKSRMAKRLNSSAA.

The segment covering 1 to 11 (MANIKSSEKDI) has biased composition (basic and acidic residues). 2 disordered regions span residues 1 to 31 (MANI…LRTQ) and 69 to 88 (SKNA…SSAA).

Belongs to the bacterial ribosomal protein bS20 family.

Its function is as follows. Binds directly to 16S ribosomal RNA. The chain is Small ribosomal subunit protein bS20 from Leptospira interrogans serogroup Icterohaemorrhagiae serovar copenhageni (strain Fiocruz L1-130).